We begin with the raw amino-acid sequence, 324 residues long: Ribose 1,5-bisphosphate isomerase (324 aa).

Substrate is bound by residues 22–25 and Arg65; that span reads RGAG. Catalysis depends on Cys135, which acts as the Proton acceptor. 137–139 is a binding site for substrate; sequence SKA. Asp204 functions as the Proton donor in the catalytic mechanism. Substrate-binding positions include 214-215 and Lys240; that span reads NK.

The protein belongs to the eIF-2B alpha/beta/delta subunits family. R15P isomerase subfamily.

It catalyses the reaction alpha-D-ribose 1,5-bisphosphate = D-ribulose 1,5-bisphosphate. Functionally, catalyzes the isomerization of ribose 1,5-bisphosphate (R15P) to ribulose 1,5-bisphosphate (RuBP), the CO(2) acceptor and substrate for RubisCO. Functions in an archaeal AMP degradation pathway, together with AMP phosphorylase and RubisCO. In Pyrococcus horikoshii (strain ATCC 700860 / DSM 12428 / JCM 9974 / NBRC 100139 / OT-3), this protein is Ribose 1,5-bisphosphate isomerase.